A 133-amino-acid chain; its full sequence is Large ribosomal subunit protein bL19 (133 aa).

It belongs to the bacterial ribosomal protein bL19 family.

This protein is located at the 30S-50S ribosomal subunit interface and may play a role in the structure and function of the aminoacyl-tRNA binding site. The sequence is that of Large ribosomal subunit protein bL19 from Stenotrophomonas maltophilia (strain R551-3).